Reading from the N-terminus, the 408-residue chain is LL-diaminopimelate aminotransferase (408 aa).

Substrate-binding residues include Y15 and G42. Residues Y72, 108 to 109 (SK), Y132, N187, Y218, and 246 to 248 (SFS) each bind pyridoxal 5'-phosphate. Residues K109, Y132, and N187 each coordinate substrate. An N6-(pyridoxal phosphate)lysine modification is found at K249. Residues R257 and N292 each coordinate pyridoxal 5'-phosphate. Substrate-binding residues include N292 and R388.

It belongs to the class-I pyridoxal-phosphate-dependent aminotransferase family. LL-diaminopimelate aminotransferase subfamily. In terms of assembly, homodimer. Pyridoxal 5'-phosphate serves as cofactor.

The catalysed reaction is (2S,6S)-2,6-diaminopimelate + 2-oxoglutarate = (S)-2,3,4,5-tetrahydrodipicolinate + L-glutamate + H2O + H(+). It participates in amino-acid biosynthesis; L-lysine biosynthesis via DAP pathway; LL-2,6-diaminopimelate from (S)-tetrahydrodipicolinate (aminotransferase route): step 1/1. In terms of biological role, involved in the synthesis of meso-diaminopimelate (m-DAP or DL-DAP), required for both lysine and peptidoglycan biosynthesis. Catalyzes the direct conversion of tetrahydrodipicolinate to LL-diaminopimelate. In Prochlorococcus marinus (strain MIT 9515), this protein is LL-diaminopimelate aminotransferase.